Here is a 272-residue protein sequence, read N- to C-terminus: Undecaprenyl-diphosphatase (272 aa).

The next 7 membrane-spanning stretches (helical) occupy residues 42–62, 92–112, 120–140, 149–169, 194–214, 224–244, and 252–272; these read FGLSFDVALHLGTLVAVVVFF, YLVLAATVPAALIGYLWEDFF, WVVVFNLAFVGLLFLVAEAVG, MGFAEAVGIGLAQAAALVPGV, FLMSAPIIAGAGTLQLGEVLA, MFAVGFLCSAVVGYLAIRFFI, and LRAFAYYRFALAALVAALLLL.

Belongs to the UppP family.

The protein resides in the cell membrane. The catalysed reaction is di-trans,octa-cis-undecaprenyl diphosphate + H2O = di-trans,octa-cis-undecaprenyl phosphate + phosphate + H(+). Functionally, catalyzes the dephosphorylation of undecaprenyl diphosphate (UPP). Confers resistance to bacitracin. This Rubrobacter xylanophilus (strain DSM 9941 / JCM 11954 / NBRC 16129 / PRD-1) protein is Undecaprenyl-diphosphatase.